A 429-amino-acid chain; its full sequence is Cell cycle protein kinase spo4 (429 aa).

A Protein kinase domain is found at 40–402; sequence YHVVKLVGAG…KAKTALQHEF (363 aa). ATP contacts are provided by residues 46-54 and Lys95; that span reads VGAGSFSSV. The active-site Proton acceptor is Asp182. Thr264 bears the Phosphothreonine mark.

This sequence belongs to the protein kinase superfamily. Ser/Thr protein kinase family. CDC7 subfamily. As to quaternary structure, interacts with spo6.

The protein resides in the nucleus. It carries out the reaction L-seryl-[protein] + ATP = O-phospho-L-seryl-[protein] + ADP + H(+). The enzyme catalyses L-threonyl-[protein] + ATP = O-phospho-L-threonyl-[protein] + ADP + H(+). Its function is as follows. Required for the initiation of meiosis II and progression through anaphase II. In Schizosaccharomyces pombe (strain 972 / ATCC 24843) (Fission yeast), this protein is Cell cycle protein kinase spo4 (spo4).